The primary structure comprises 204 residues: Tetraspanin-13 (204 aa).

At 1-19 (MVCGGFSCSKNCLCALNLL) the chain is on the cytoplasmic side. A helical membrane pass occupies residues 20–40 (YTLVSLLLIGIAAWGIGFGLI). Residues 41–44 (SSLR) lie on the Extracellular side of the membrane. A helical transmembrane segment spans residues 45–65 (VVGVVIAVGIFLFLIALVGLI). Residues 66–72 (GAVKHHQ) are Cytoplasmic-facing. A helical transmembrane segment spans residues 73-93 (VLLFFYMIILLLVFIVQFSVS). Residues 94-167 (CACLALNREQ…IGEYAGEVLR (74 aa)) lie on the Extracellular side of the membrane. N-linked (GlcNAc...) asparagine glycans are attached at residues asparagine 113 and asparagine 137. The residue at position 143 (serine 143) is a Phosphoserine. The chain crosses the membrane as a helical span at residues 168–188 (FVGGIGLFFSFTEILGVWLTY). The Cytoplasmic portion of the chain corresponds to 189–204 (RYRNQKDPRANPSAFL).

Belongs to the tetraspanin (TM4SF) family.

It is found in the membrane. The chain is Tetraspanin-13 (Tspan13) from Mus musculus (Mouse).